The primary structure comprises 713 residues: Metal transporter CNNM3 (713 aa).

Residues 7–29 (AVVGWLGWVLAAFCLGSTAGEAA) form a helical membrane-spanning segment. The N-linked (GlcNAc...) asparagine glycan is linked to Asn-73. A CNNM transmembrane domain is found at 136 to 314 (EAAPPWALGL…DPYSDLSKGV (179 aa)). 4 helical membrane-spanning segments follow: residues 137–157 (AAPP…AAVA), 199–219 (CALG…AVLL), 227–247 (AVPA…VLPA), and 267–287 (LAVL…ELAA). CBS domains follow at residues 324 to 385 (LTPL…CTPL) and 392 to 458 (YNHP…ILDE). The disordered stretch occupies residues 664-713 (LPPSPENAELQAIPGSQTRLLGDKSRETAGSTNSRPSIPVEESPGRNPGV). 2 positions are modified to phosphoserine: Ser-667 and Ser-706.

It belongs to the ACDP family. As to expression, widely expressed with highest levels in brain, kidney, liver, lung and heart.

The protein localises to the cell membrane. Functionally, probable metal transporter. This is Metal transporter CNNM3 (Cnnm3) from Mus musculus (Mouse).